Reading from the N-terminus, the 551-residue chain is MSHILRAAVLAAVLLPFPALADQAGKSPAGVRYHGGDEIILQGFHWNVVREAPNDWYNILRQQASTIAADGFSAIWMPVPWRDFSSWTDGGKSGGGEGYFWHDFNKNGRYGSDAQLRQAAGALGGAGVKVLYDVVPNHMNRGYPDKEINLPAGQGFWRNDCADPGNYPNDCDDGDRFIGGESDLNTGHPQIYGMFRDELANLRSGYGAGGFRFDFVRGYAPERVDSWMSDSADSSFCVGELWKGPSEYPSWDWRNTASWQQIIKDWSDRAKCPVFDFALKERMQNGSVADWKHGLNGNPDPRWREVAVTFVDNHDTGYSPGQNGGQHHWALQDGLIRQAYAYILTSPGTPVVYWSHMYDWGYGDFIRQLIQVRRTAGVRADSAISFHSGYSGLVATVSGSQQTLVVALNSDLANPGQVASGSFSEAVNASNGQVRVWRSGSGDGGGNDGGEGGLVNVNFRCDNGVTQMGDSVYAVGNVSQLGNWSPASAVRLTDTSSYPTWKGSIALPDGQNVEWKCLIRNEADATLVRQWQSGGNNQVQAAAGASTSGSF.

Residues 1–21 (MSHILRAAVLAAVLLPFPALA) form the signal peptide. Asp22, Gln23, His34, Asp37, and Glu38 together coordinate Ca(2+). 99–100 (YF) lines the substrate pocket. Asn137 is a Ca(2+) binding site. Residue His138 participates in substrate binding. The cysteines at positions 161 and 171 are disulfide-linked. Residues Asp172 and Asp175 each contribute to the Ca(2+) site. Residue 177–181 (FIGGE) participates in substrate binding. Asp183 serves as a coordination point for Ca(2+). Arg212 serves as a coordination point for substrate. Asp214 (nucleophile) is an active-site residue. Ca(2+) is bound at residue Gly218. A disulfide bridge links Cys237 with Cys272. The active-site Proton donor is Glu240. The substrate site is built by His314 and Gln326. Residues 449–551 (GGEGGLVNVN…AAGASTSGSF (103 aa)) form the CBM20 domain.

Belongs to the glycosyl hydrolase 13 family. As to quaternary structure, monomer. Ca(2+) serves as cofactor.

Its subcellular location is the secreted. It catalyses the reaction Hydrolysis of (1-&gt;4)-alpha-D-glucosidic linkages in amylaceous polysaccharides, to remove successive maltotetraose residues from the non-reducing chain ends.. It participates in glycan degradation; starch degradation. This chain is Glucan 1,4-alpha-maltotetraohydrolase (mta), found in Roseateles saccharophilus (Pseudomonas saccharophila).